Reading from the N-terminus, the 321-residue chain is Ribose-phosphate pyrophosphokinase (321 aa).

ATP contacts are provided by residues 39–41 (DGE) and 98–99 (RQ). The Mg(2+) site is built by H132 and D170. Residue K195 is part of the active site. Residues R197, D221, and 225 to 229 (DTGGT) each bind D-ribose 5-phosphate.

It belongs to the ribose-phosphate pyrophosphokinase family. Class I subfamily. In terms of assembly, homohexamer. Requires Mg(2+) as cofactor.

The protein resides in the cytoplasm. The catalysed reaction is D-ribose 5-phosphate + ATP = 5-phospho-alpha-D-ribose 1-diphosphate + AMP + H(+). Its pathway is metabolic intermediate biosynthesis; 5-phospho-alpha-D-ribose 1-diphosphate biosynthesis; 5-phospho-alpha-D-ribose 1-diphosphate from D-ribose 5-phosphate (route I): step 1/1. Functionally, involved in the biosynthesis of the central metabolite phospho-alpha-D-ribosyl-1-pyrophosphate (PRPP) via the transfer of pyrophosphoryl group from ATP to 1-hydroxyl of ribose-5-phosphate (Rib-5-P). The protein is Ribose-phosphate pyrophosphokinase of Mycoplasmopsis pulmonis (strain UAB CTIP) (Mycoplasma pulmonis).